Consider the following 510-residue polypeptide: Maturase K (510 aa).

This sequence belongs to the intron maturase 2 family. MatK subfamily.

It localises to the plastid. The protein localises to the chloroplast. In terms of biological role, usually encoded in the trnK tRNA gene intron. Probably assists in splicing its own and other chloroplast group II introns. In Anomochloa marantoidea (Herbaceous bamboo), this protein is Maturase K.